We begin with the raw amino-acid sequence, 485 residues long: Probable cobyric acid synthase (485 aa).

Residues 250–435 (EVEIAVIRLP…LHGLFDNENI (186 aa)) enclose the GATase cobBQ-type domain. Cys-328 functions as the Nucleophile in the catalytic mechanism. The active site involves His-427.

Belongs to the CobB/CobQ family. CobQ subfamily.

Its pathway is cofactor biosynthesis; adenosylcobalamin biosynthesis. Its function is as follows. Catalyzes amidations at positions B, D, E, and G on adenosylcobyrinic A,C-diamide. NH(2) groups are provided by glutamine, and one molecule of ATP is hydrogenolyzed for each amidation. This chain is Probable cobyric acid synthase, found in Methanosarcina acetivorans (strain ATCC 35395 / DSM 2834 / JCM 12185 / C2A).